A 239-amino-acid chain; its full sequence is Sugar fermentation stimulation protein homolog (239 aa).

This sequence belongs to the SfsA family.

This chain is Sugar fermentation stimulation protein homolog, found in Shewanella woodyi (strain ATCC 51908 / MS32).